Consider the following 543-residue polypeptide: Exodeoxyribonuclease 7 large subunit (543 aa).

The tract at residues 498-543 (VTGEGDKASPPPQAASATTTPAPGRPNPLPKSPKKSEPPAGQGSLF) is disordered.

Belongs to the XseA family. As to quaternary structure, heterooligomer composed of large and small subunits.

It localises to the cytoplasm. It carries out the reaction Exonucleolytic cleavage in either 5'- to 3'- or 3'- to 5'-direction to yield nucleoside 5'-phosphates.. Its function is as follows. Bidirectionally degrades single-stranded DNA into large acid-insoluble oligonucleotides, which are then degraded further into small acid-soluble oligonucleotides. In Allorhizobium ampelinum (strain ATCC BAA-846 / DSM 112012 / S4) (Agrobacterium vitis (strain S4)), this protein is Exodeoxyribonuclease 7 large subunit.